We begin with the raw amino-acid sequence, 576 residues long: Epsin-1 (576 aa).

Residues Arg-8, Lys-11, Arg-25, Asn-30, Arg-63, and His-73 each coordinate a 1,2-diacyl-sn-glycero-3-phospho-(1D-myo-inositol-4,5-bisphosphate). The ENTH domain maps to 12 to 144; sequence NIVHNYSEAE…RDEDRLREER (133 aa). The segment at 149-185 is disordered; it reads KTKEKLAQTATASSAAVGSGPPPEAEQAWPQSSGEEE. Low complexity predominate over residues 157 to 167; it reads TATASSAAVGS. UIM domains lie at 183-202, 208-227, and 233-252; these read EEELQLQLALAMSKEEADQP, EDDAQLQLALSLSREEHDKE, and GDDLRLQMAIEESKRETGGK. Over residues 265–296 the composition is skewed to low complexity; sequence TAPAPAPTTDPWGGPAPMAAAVPTAAPTSDPW. Positions 265 to 404 are disordered; it reads TAPAPAPTTD…GGFDTEPDEF (140 aa). A run of 8 repeats spans residues 274–276, 294–296, 306–308, 319–321, 332–334, 349–351, 367–369, and 377–379. The interval 274 to 379 is 8 X 3 AA repeats of [ED]-P-W; the sequence is DPWGGPAPMA…TPAPAFSDPW (106 aa). Pro residues predominate over residues 297 to 314; the sequence is GGPPVPPAADPWGGPAPT. The segment covering 332–368 has biased composition (low complexity); that stretch reads DPWGGTPAPAAGEGPTPDPWGSSDGGVPVSGPSASDP. Ser-382 bears the Phosphoserine; by CDK1 mark. The [DE]-X(1,2)-F-X-X-[FL]-X-X-X-R motif motif lies at 402–411; that stretch reads DEFSDFDRLR. Phosphoserine occurs at positions 419, 420, 435, 447, and 454. The tract at residues 448 to 576 is disordered; sequence LAEAVGSPPP…PAPNTNPFLL (129 aa). Over residues 454–468 the composition is skewed to pro residues; the sequence is SPPPAATPTPTPPTR. Residues Thr-460, Thr-464, and Thr-470 each carry the phosphothreonine modification. Ser-473 is subject to Phosphoserine. Thr-494 carries the phosphothreonine modification. A run of 2 repeats spans residues 502-504 and 518-520. A 3 X 3 AA repeats of N-P-F region spans residues 502–574; that stretch reads NPFLPGGGPA…GPPAPNTNPF (73 aa). The residue at position 534 (Arg-534) is an Omega-N-methylarginine. Residues 557-570 are compositionally biased toward pro residues; it reads GLPPMMPPGPPAPN. Copy 3 of the repeat occupies 572–574; the sequence is NPF.

Belongs to the epsin family. In terms of assembly, monomer. Binds clathrin, ZBTB16/ZNF145 and ITSN1. Binds ubiquitinated proteins. Binds AP2A1 and AP2A2. Interacts with RALBP1 in a complex also containing NUMB and TFAP2A during interphase and mitosis. Interacts with AP2B1. Interacts with UBQLN2. Interacts with REPS2; the interaction is direct. Interacts with EPS15; the interaction is direct. Interacts with ENTREP1. Post-translationally, phosphorylated on serine and/or threonine residues in mitotic cells. Phosphorylation reduces interaction with REPS2, AP-2 and the membrane fraction. Depolarization of synaptosomes results in dephosphorylation. In terms of processing, ubiquitinated.

It is found in the cytoplasm. The protein localises to the cell membrane. Its subcellular location is the nucleus. The protein resides in the membrane. It localises to the clathrin-coated pit. Functionally, binds to membranes enriched in phosphatidylinositol 4,5-bisphosphate (PtdIns(4,5)P2). Modifies membrane curvature and facilitates the formation of clathrin-coated invaginations. Regulates receptor-mediated endocytosis. This chain is Epsin-1 (EPN1), found in Homo sapiens (Human).